Consider the following 922-residue polypeptide: Lysine-specific demethylase 7A (922 aa).

A PHD-type zinc finger spans residues 6-57 (PVYCVCRQPYDVSRFMIECDICKDWFHSSCVKVEEHQAADIDLYHCPNCEVL). Residues 199 to 355 (FSDTKMADLV…MQLRCYEMEK (157 aa)) enclose the JmjC domain. T248 is a binding site for substrate. 2 residues coordinate Fe cation: H251 and D253. Position 268 (K268) interacts with substrate. H323 contributes to the Fe cation binding site. Disordered stretches follow at residues 445–490 (EEEG…TKTP), 565–607 (RSLY…TQKP), 622–711 (GSSE…EQEA), 754–773 (GKEHLDSHSHKAANSDHHVK), and 872–902 (LHPTKRPASNPPPISNQATKGKRPKKGMATA). Positions 473-483 (HHSGRKARRLR) are enriched in basic residues. Over residues 648 to 666 (ESESSGDDDDEEEEEEEER) the composition is skewed to acidic residues. Basic and acidic residues-rich tracts occupy residues 667-683 (QEPIRNLKEEHSGRRLP) and 691-701 (PDHDSPQKREC).

This sequence belongs to the JHDM1 histone demethylase family. JHDM1D subfamily. The cofactor is Fe(2+).

It localises to the nucleus. In terms of biological role, histone demethylase required for brain development. Specifically demethylates dimethylated 'Lys-9' and 'Lys-27' (H3K9me2 and H3K27me2, respectively) of histone H3 and monomethylated histone H4 'Lys-20' residue (H4K20Me1), thereby playing a central role in histone code. In Xenopus tropicalis (Western clawed frog), this protein is Lysine-specific demethylase 7A (kdm7a).